Here is a 317-residue protein sequence, read N- to C-terminus: Glutamyl-tRNA reductase-binding protein, chloroplastic (317 aa).

The N-terminal 42 residues, 1-42 (MQLQTQSFALNLLPSPNFAKPIERREFISLKRDPSRPISLRC), are a transit peptide targeting the chloroplast.

In terms of assembly, interacts with HEMA1 and forms a heterotetramer of two GLUTRBP and two HEMA1 subunits.

The protein resides in the plastid. It localises to the chloroplast stroma. Involved in the regulation of glutamyl-tRNA reductase (GluTR) which is important for the synthesis and distribution of 5-aminolevulinate, a precursor in heme and chlorophyll biosynthesis. Stimulates GluTR activity and regulates glutamate-1-semialdehyde release. May play a role in heme metabolism. Necessary for efficient photosynthetic electron transport in chloroplasts. The polypeptide is Glutamyl-tRNA reductase-binding protein, chloroplastic (Arabidopsis thaliana (Mouse-ear cress)).